A 686-amino-acid polypeptide reads, in one-letter code: Pentatricopeptide repeat-containing protein At4g08210 (686 aa).

PPR repeat units lie at residues 4 to 38, 39 to 69, 70 to 104, 106 to 140, 141 to 171, 172 to 206, 207 to 236, 237 to 271, 272 to 302, 306 to 340, 341 to 375, 376 to 406, 407 to 441, 442 to 476, 477 to 507, 508 to 542, 543 to 573, and 579 to 609; these read DLKLIAAGLRHCGKVQAFKRGESIQAHVIKQGISQ, NVFIANNVISMYVDFRLLSDAHKVFDEMSER, NIVTWTTMVSGYTSDGKPNKAIELYRRMLDSEEEA, NEFMYSAVLKACGLVGDIQLGILVYERIGKENLRG, DVVLMNSVVDMYVKNGRLIEANSSFKEILRP, SSTSWNTLISGYCKAGLMDEAVTLFHRMPQPNVVS, WNCLISGFVDKGSPRALEFLVRMQREGLVL, DGFALPCGLKACSFGGLLTMGKQLHCCVVKSGLES, SPFAISALIDMYSNCGSLIYAADVFHQEKLA, SVAVWNSMLSGFLINEENEAALWLLLQIYQSDLCF, DSYTLSGALKICINYVNLRLGLQVHSLVVVSGYEL, DYIVGSILVDLHANVGNIQDAHKLFHRLPNK, DIIAFSGLIRGCVKSGFNSLAFYLFRELIKLGLDA, DQFIVSNILKVCSSLASLGWGKQIHGLCIKKGYES, EPVTATALVDMYVKCGEIDNGVVLFDGMLER, DVVSWTGIIVGFGQNGRVEEAFRYFHKMINIGIEP, NKVTFLGLLSACRHSGLLEEARSTLETMKSE, and YLEHYYCVVDLLGQAGLFQEANELINKMPLE. Residues 614–686 are type E motif; degenerate; the sequence is IWTSLLTACG…AKESGMSWII (73 aa).

Belongs to the PPR family. PCMP-E subfamily.

The chain is Pentatricopeptide repeat-containing protein At4g08210 (PCMP-E100) from Arabidopsis thaliana (Mouse-ear cress).